Consider the following 409-residue polypeptide: 8-amino-7-oxononanoate synthase (409 aa).

Substrate is bound at residue Arg-20. Gly-116–Tyr-117 is a binding site for pyridoxal 5'-phosphate. His-141 provides a ligand contact to substrate. Residues Ser-187, His-215, and Thr-243 each coordinate pyridoxal 5'-phosphate. Lys-246 is modified (N6-(pyridoxal phosphate)lysine). Thr-369 is a binding site for substrate.

It belongs to the class-II pyridoxal-phosphate-dependent aminotransferase family. BioF subfamily. In terms of assembly, homodimer. Pyridoxal 5'-phosphate is required as a cofactor.

It catalyses the reaction 6-carboxyhexanoyl-[ACP] + L-alanine + H(+) = (8S)-8-amino-7-oxononanoate + holo-[ACP] + CO2. It participates in cofactor biosynthesis; biotin biosynthesis. Its function is as follows. Catalyzes the decarboxylative condensation of pimeloyl-[acyl-carrier protein] and L-alanine to produce 8-amino-7-oxononanoate (AON), [acyl-carrier protein], and carbon dioxide. The chain is 8-amino-7-oxononanoate synthase from Polaromonas naphthalenivorans (strain CJ2).